Here is a 228-residue protein sequence, read N- to C-terminus: L-ribulose-5-phosphate 4-epimerase UlaF (228 aa).

Substrate-binding positions include 26 to 27, 43 to 44, and 72 to 73; these read GN, SG, and SS. Asp-74, His-93, and His-95 together coordinate Zn(2+). The Proton donor/acceptor role is filled by Asp-118. His-167 contacts Zn(2+). Tyr-225 functions as the Proton donor/acceptor in the catalytic mechanism.

Belongs to the aldolase class II family. AraD/FucA subfamily. Zn(2+) is required as a cofactor.

The enzyme catalyses L-ribulose 5-phosphate = D-xylulose 5-phosphate. Its pathway is cofactor degradation; L-ascorbate degradation; D-xylulose 5-phosphate from L-ascorbate: step 4/4. Its function is as follows. Catalyzes the isomerization of L-ribulose 5-phosphate to D-xylulose 5-phosphate. Is involved in the anaerobic L-ascorbate utilization. The sequence is that of L-ribulose-5-phosphate 4-epimerase UlaF from Escherichia coli O8 (strain IAI1).